Consider the following 369-residue polypeptide: Peptide chain release factor 1 (369 aa).

Gln-238 carries the post-translational modification N5-methylglutamine.

This sequence belongs to the prokaryotic/mitochondrial release factor family. In terms of processing, methylated by PrmC. Methylation increases the termination efficiency of RF1.

The protein resides in the cytoplasm. Functionally, peptide chain release factor 1 directs the termination of translation in response to the peptide chain termination codons UAG and UAA. This Parabacteroides distasonis (strain ATCC 8503 / DSM 20701 / CIP 104284 / JCM 5825 / NCTC 11152) protein is Peptide chain release factor 1.